The following is a 295-amino-acid chain: Ribosomal protein L11 methyltransferase (295 aa).

S-adenosyl-L-methionine contacts are provided by Thr145, Gly166, Asp188, and Asn230.

Belongs to the methyltransferase superfamily. PrmA family.

It is found in the cytoplasm. The catalysed reaction is L-lysyl-[protein] + 3 S-adenosyl-L-methionine = N(6),N(6),N(6)-trimethyl-L-lysyl-[protein] + 3 S-adenosyl-L-homocysteine + 3 H(+). Functionally, methylates ribosomal protein L11. This Pectobacterium atrosepticum (strain SCRI 1043 / ATCC BAA-672) (Erwinia carotovora subsp. atroseptica) protein is Ribosomal protein L11 methyltransferase.